Reading from the N-terminus, the 210-residue chain is Orotate phosphoribosyltransferase (210 aa).

5-phospho-alpha-D-ribose 1-diphosphate contacts are provided by residues R97, K98, and N125–S133. Orotate is bound by residues S129 and R157.

This sequence belongs to the purine/pyrimidine phosphoribosyltransferase family. PyrE subfamily. Homodimer. Requires Mg(2+) as cofactor.

The catalysed reaction is orotidine 5'-phosphate + diphosphate = orotate + 5-phospho-alpha-D-ribose 1-diphosphate. The protein operates within pyrimidine metabolism; UMP biosynthesis via de novo pathway; UMP from orotate: step 1/2. Its function is as follows. Catalyzes the transfer of a ribosyl phosphate group from 5-phosphoribose 1-diphosphate to orotate, leading to the formation of orotidine monophosphate (OMP). This is Orotate phosphoribosyltransferase from Chlamydia pneumoniae (Chlamydophila pneumoniae).